Reading from the N-terminus, the 427-residue chain is MKTFAQLRLLLAAAALALLSFSAQAQLSIEITGAGASRFPVIIPVFENEASLPRSVSDIVRADLERSGLFSLVDIGPLPLPEGQIPDLGSLRSRGADAALAASVFPQGDGRYEIRFRLFDTQKQTELGALALRMTAAQNRITAHRIADFVYEKLTGLPGYFATRIAYVVKTGPRYELQVADADGMNAQAALVSREPIISPAWSPDGGRLAYVSFEAKKPIIYVHTLATGQRQVVANFKGSNSAPAWSPDGQQLSVVLTKDGLSQLYVLNADGSGVRRLASSSGIDTEPAWSPDGQWIYFTSDRGGSPQIYRIPTAGGAAQRVTFDGTYNVTARPSADGRLLAFITRNNGRFQVAVQDLTTRQTTILTDSARDESPSFAPNGRMILYATDAGGRGVLAAVSSDGRVKQRLSVQAADVREPAWGPLQKQ.

Residues 1–25 (MKTFAQLRLLLAAAALALLSFSAQA) form the signal peptide.

This sequence belongs to the TolB family. In terms of assembly, the Tol-Pal system is composed of five core proteins: the inner membrane proteins TolA, TolQ and TolR, the periplasmic protein TolB and the outer membrane protein Pal. They form a network linking the inner and outer membranes and the peptidoglycan layer.

The protein resides in the periplasm. In terms of biological role, part of the Tol-Pal system, which plays a role in outer membrane invagination during cell division and is important for maintaining outer membrane integrity. The chain is Tol-Pal system protein TolB from Azoarcus sp. (strain BH72).